We begin with the raw amino-acid sequence, 276 residues long: 2-dehydro-3-deoxyphosphooctonate aldolase (276 aa).

This sequence belongs to the KdsA family.

Its subcellular location is the cytoplasm. The enzyme catalyses D-arabinose 5-phosphate + phosphoenolpyruvate + H2O = 3-deoxy-alpha-D-manno-2-octulosonate-8-phosphate + phosphate. Its pathway is carbohydrate biosynthesis; 3-deoxy-D-manno-octulosonate biosynthesis; 3-deoxy-D-manno-octulosonate from D-ribulose 5-phosphate: step 2/3. It participates in bacterial outer membrane biogenesis; lipopolysaccharide biosynthesis. The sequence is that of 2-dehydro-3-deoxyphosphooctonate aldolase from Xylella fastidiosa (strain 9a5c).